Consider the following 175-residue polypeptide: Lithostathine (175 aa).

The first 26 residues, 1–26, serve as a signal peptide directing secretion; sequence MLPSLGLPRLSWMLLSCLMLLSQIQG. The propeptide occupies 27-37; the sequence is ENSQKELPSAR. The C-type lectin domain maps to 38-173; that stretch reads ISCPSGSMAY…NLNLPYVCKF (136 aa). 3 disulfides stabilise this stretch: Cys-40/Cys-51, Cys-68/Cys-171, and Cys-146/Cys-163.

Cleaved to give an A chain and a B chain joined by a disulfide bond. In pancreatic acinar cells.

The protein localises to the secreted. In terms of biological role, might act as an inhibitor of spontaneous calcium carbonate precipitation. The sequence is that of Lithostathine (PTP) from Bos taurus (Bovine).